Here is a 356-residue protein sequence, read N- to C-terminus: Tyrosine recombinase XerS (356 aa).

The region spanning 16-121 is the Core-binding (CB) domain; sequence IMPWYVLDYY…ALSSLYKYLT (106 aa). Positions 169–354 constitute a Tyr recombinase domain; it reads AFLDYVDKEY…VNDEQKNALD (186 aa). Residues Arg210, Lys234, His306, Arg309, and His332 contribute to the active site. Tyr341 (O-(3'-phospho-DNA)-tyrosine intermediate) is an active-site residue.

It belongs to the 'phage' integrase family. XerS subfamily.

The protein resides in the cytoplasm. FtsK is required for recombination. Functionally, site-specific tyrosine recombinase, which acts by catalyzing the cutting and rejoining of the recombining DNA molecules. Essential to convert dimers of the bacterial chromosome into monomers to permit their segregation at cell division. The sequence is that of Tyrosine recombinase XerS from Streptococcus pyogenes serotype M18 (strain MGAS8232).